The primary structure comprises 210 residues: uncharacterized protein (210 aa).

This is an uncharacterized protein from Sulfolobus islandicus filamentous virus (isolate Iceland/Hveragerdi) (SIFV).